Reading from the N-terminus, the 116-residue chain is Putative anti-sigma factor antagonist BtrV (116 aa).

The 110-residue stretch at 1-110 (MKLTMDKIDG…NSREAAAAAF (110 aa)) folds into the STAS domain. Serine 55 bears the Phosphoserine; by BtrW mark.

Belongs to the anti-sigma-factor antagonist family. As to quaternary structure, interacts with BtrW. In terms of processing, phosphorylated by BtrW. Dephosphorylated by BtrU.

Its function is as follows. Possible positive regulator of sigma-B activity. Non-phosphorylated BtrV binds to BtrW, preventing its association with an unknown partner(s) that might be sigma-B. When phosphorylated, releases BtrW, which is then free to complex with and inactivate its partner. Involved in type III secretion system (T3SS). The sequence is that of Putative anti-sigma factor antagonist BtrV (btrV) from Bordetella bronchiseptica (strain ATCC BAA-588 / NCTC 13252 / RB50) (Alcaligenes bronchisepticus).